The sequence spans 1185 residues: MNNSVTRLLFKRLLTLQLCHHFDIIPHRDQSFDCVQMQQPQNETANNFIPSIQLLWSTDPPQIRPDGTYPQAVELFPCFKDKWNTKEEILNIILAANADPKSNCVTVQSSPRPCSSSQFIYPRLDNAWYKNDGYIWKKRTNGKQNREDHLNLKISGHPHISAKYIHSAIVPTFHRRSYSVPDSDCHVLVHYLNVKTNNKIDDQAEEIARSMIENKVFISLSQLHDQLSPIFLQTLNVNQLVAEINEHLKKKGVNLPTSPLPQEPSSSTSRELERRNSCSSAFRKGLSSVALRRQPSANSEIDANHIGTMLKRFGCNGSSSDRISIIQPTMQNFQSIRSHQNHVAMESRSPSGDGDSRPITFEEDASYQQLSIKSSTNVSTPASAFAEKMKIRSGSQESPMGPPSSSSVTSTSLIPIIEMTPSSSSLKGGQKMLVVGGYYRKGHEYKISFGRGRMMPAVLIHAGVLSCVIPPSAKPEVVQIRVFCNGQAISTASEFTYEPQSAHLIKENDDTLVQIFEKIRIMACAFNAYSSIENIQSSSCMESLLANIVQQIDNEVSSQNLNYKTELLNGSAHFPSKTVLHLVASLDYDRLFEALIDLSRKVPACREFDIFARDNDGSTPLHTACKNSASRIARLIISIDSSAIDVVDDRGRTPVEVAPEHSIDMLSDKNNEEERVNATELWVMTNGKAFTTDKILDGKISRAPIAEKPDDLLREATSSYSIMSEMYEGPMLQAGTSRECDEDCESCCDPDSTQQLHVEIAMDTDVHVPDSPKMARLFHAVTSPGIVVPPNARARMADLARQIIEALPDRIKRNSEVSMCPDEEDPGQNHHGGVEPMFYQQASCSMSTDSPNMMDDYFDMMATETRNDIFTEPRSTETTETSASKSAQLFATHCNFFDDRSFASSSTRANTFESDTLDFDKDLGEFFTIHVDRFVDPIQQRLANLKYNDDEQRDVYEAAMVIQRAYRVYRARSTTRRQEDIERRAALKIQGCYRRYKQFCYFKKLHNAAIVVQKHFRMRKRDDKEEGAVEAVIASVPEHPTLDGQSICIQVPKTNSTMLRERAATTIQVAYRYRHRKRQAAARKIQNFMRQNRNNVNIDDGHTQHLIAENACAKRRRYVACPQTSGDQRNKRDSDGERKRDAHHDAPEFIPIGATPSSTTIPHRPTQRHHPWDQLKPPYGCGTLA.

Residues 72–200 (AVELFPCFKD…YLNVKTNNKI (129 aa)) constitute a DNA-binding region (CG-1). 2 disordered regions span residues 252–277 (GVNL…RRNS) and 390–411 (KIRS…VTST). Over residues 393-411 (SGSQESPMGPPSSSSVTST) the composition is skewed to low complexity. Positions 418–498 (EMTPSSSSLK…ISTASEFTYE (81 aa)) constitute an IPT/TIG domain. The stretch at 616-646 (DGSTPLHTACKNSASRIARLIISIDSSAIDV) is one ANK repeat. Residues 957 to 984 (EAAMVIQRAYRVYRARSTTRRQEDIERR) form the IQ domain. Residues 1121 to 1185 (CPQTSGDQRN…KPPYGCGTLA (65 aa)) are disordered. Basic and acidic residues predominate over residues 1128 to 1147 (QRNKRDSDGERKRDAHHDAP).

It belongs to the CAMTA family. As to quaternary structure, may interact with calmodulin. In terms of tissue distribution, expressed broadly in the nervous system.

The protein localises to the nucleus. Functionally, transcription factor. Positively modulates neuronal levels of the ubiquitous Ca2+ sensor calmodulin/cmd-1, probably by direct binding to the cmd-1 promoter, thereby regulating Ca2+ signaling, physiology, and behavior. This Caenorhabditis elegans protein is Calmodulin-binding transcription activator homolog 1.